The chain runs to 137 residues: SMR2 protein (137 aa).

Residues 1–18 (MLVVLLTAALLALSSAQN) form the signal peptide. Positions 14 to 113 (SSAQNTDEEV…LHHRENLRPQ (100 aa)) are disordered. Residues 75–85 (QQQQPLPVENQ) are compositionally biased toward low complexity. Over residues 99–110 (PPPETLHHRENL) the composition is skewed to basic and acidic residues.

The protein resides in the secreted. Functionally, unknown, male-specific function. The sequence is that of SMR2 protein (Smr2) from Rattus norvegicus (Rat).